The chain runs to 494 residues: Aspartyl/glutamyl-tRNA(Asn/Gln) amidotransferase subunit B (494 aa).

This sequence belongs to the GatB/GatE family. GatB subfamily. Heterotrimer of A, B and C subunits.

The enzyme catalyses L-glutamyl-tRNA(Gln) + L-glutamine + ATP + H2O = L-glutaminyl-tRNA(Gln) + L-glutamate + ADP + phosphate + H(+). The catalysed reaction is L-aspartyl-tRNA(Asn) + L-glutamine + ATP + H2O = L-asparaginyl-tRNA(Asn) + L-glutamate + ADP + phosphate + 2 H(+). In terms of biological role, allows the formation of correctly charged Asn-tRNA(Asn) or Gln-tRNA(Gln) through the transamidation of misacylated Asp-tRNA(Asn) or Glu-tRNA(Gln) in organisms which lack either or both of asparaginyl-tRNA or glutaminyl-tRNA synthetases. The reaction takes place in the presence of glutamine and ATP through an activated phospho-Asp-tRNA(Asn) or phospho-Glu-tRNA(Gln). The sequence is that of Aspartyl/glutamyl-tRNA(Asn/Gln) amidotransferase subunit B from Rhizorhabdus wittichii (strain DSM 6014 / CCUG 31198 / JCM 15750 / NBRC 105917 / EY 4224 / RW1) (Sphingomonas wittichii).